We begin with the raw amino-acid sequence, 683 residues long: Transforming growth factor-beta-induced protein ig-h3 (683 aa).

The first 23 residues, 1-23 (MALLMRLLTLALALSVGPAGTLA), serve as a signal peptide directing secretion. Serine 37 is subject to Phosphoserine. In terms of domain architecture, EMI spans 45 to 99 (GPNVCAVQKVIGTNKKYFTNCKQWYQRKICGKSTVISYECCPGYEKVPGEKGCPA). 5 disulfide bridges follow: cysteine 49-cysteine 85, cysteine 74-cysteine 339, cysteine 84-cysteine 97, cysteine 214-cysteine 317, and cysteine 473-cysteine 478. Residue cysteine 65 is modified to S-cysteinyl cysteine. 4 FAS1 domains span residues 103–236 (LSNL…DKVI), 240–371 (TNNI…DELL), 375–498 (SAKT…DRML), and 502–632 (MGTV…NTVL). Positions 642–644 (RGD) match the Cell attachment site motif.

As to quaternary structure, binds to type I, II, and IV collagens. In terms of processing, gamma-carboxylation is controversial. Gamma-carboxyglutamated; gamma-carboxyglutamate residues are formed by vitamin K dependent carboxylation; this may be required for calcium binding. According to a more recent report, does not contain vitamin K-dependent gamma-carboxyglutamate residues. The EMI domain contains 2 expected intradomain disulfide bridges (Cys-49-Cys85 and Cys-84-Cys-97) and one unusual interdomain disulfide bridge to the second FAS1 domain (Cys-74-Cys-339). This arrangement violates the predicted disulfide bridge pattern of an EMI domain. As to expression, expressed in heart, kidney, liver, skeletal muscle, testis, thyroid and uterus.

The protein localises to the secreted. The protein resides in the extracellular space. Its subcellular location is the extracellular matrix. Its function is as follows. Plays a role in cell adhesion. May play a role in cell-collagen interactions. This is Transforming growth factor-beta-induced protein ig-h3 (Tgfbi) from Mus musculus (Mouse).